We begin with the raw amino-acid sequence, 217 residues long: MKYQLTAHEARVIGCLLEKQVTTPEQYPLSVNAVVTACNQKTNREPVMSLSESEVQALLDTLVKRHYLRTVSGFGNRVTKYEQRFCNSEFGDLKLSAGEVAVVTTLLLRGAQTPGELRSRAQRMYEFSDMAEVESVLEGLATREDGPFVARLPREPGKRESRYMHLFCDDMDTLITTVEALAPLDDDGDLRARVEALEGEVAELKARLDSLLHHLGD.

This sequence belongs to the UPF0502 family.

This is UPF0502 protein KPN78578_10500 from Klebsiella pneumoniae subsp. pneumoniae (strain ATCC 700721 / MGH 78578).